The chain runs to 160 residues: Cyclic pyranopterin monophosphate synthase (160 aa).

Residues 77 to 79 (LCH) and 115 to 116 (ME) each bind substrate. The active site involves Asp130.

Belongs to the MoaC family. Homohexamer; trimer of dimers.

It catalyses the reaction (8S)-3',8-cyclo-7,8-dihydroguanosine 5'-triphosphate = cyclic pyranopterin phosphate + diphosphate. It functions in the pathway cofactor biosynthesis; molybdopterin biosynthesis. In terms of biological role, catalyzes the conversion of (8S)-3',8-cyclo-7,8-dihydroguanosine 5'-triphosphate to cyclic pyranopterin monophosphate (cPMP). The chain is Cyclic pyranopterin monophosphate synthase from Parvibaculum lavamentivorans (strain DS-1 / DSM 13023 / NCIMB 13966).